The sequence spans 249 residues: Probable transcriptional regulatory protein Wbm0670 (249 aa).

Belongs to the TACO1 family.

It is found in the cytoplasm. The sequence is that of Probable transcriptional regulatory protein Wbm0670 from Wolbachia sp. subsp. Brugia malayi (strain TRS).